We begin with the raw amino-acid sequence, 110 residues long: UPF0060 membrane protein RPA3838 (110 aa).

The next 4 helical transmembrane spans lie at 4–24, 31–51, 59–79, and 85–105; these read LLTFCAAALMEIAGCFAFWAW, PLWLIPGMLALALFAYLLTLA, AYAAYGGIYIASALLWGWAIE, and QWDVIGAAICLVGMSVILFGP.

It belongs to the UPF0060 family.

The protein resides in the cell inner membrane. The sequence is that of UPF0060 membrane protein RPA3838 from Rhodopseudomonas palustris (strain ATCC BAA-98 / CGA009).